The sequence spans 207 residues: Superoxide dismutase [Mn] (207 aa).

His30, His78, Asp166, and His170 together coordinate Mn(2+).

Belongs to the iron/manganese superoxide dismutase family. In terms of assembly, homodimer. It depends on Mn(2+) as a cofactor.

The catalysed reaction is 2 superoxide + 2 H(+) = H2O2 + O2. In terms of biological role, destroys superoxide anion radicals which are normally produced within the cells and which are toxic to biological systems. In Chlamydia pneumoniae (Chlamydophila pneumoniae), this protein is Superoxide dismutase [Mn] (sodA).